We begin with the raw amino-acid sequence, 3434 residues long: Genome polyprotein (3434 aa).

An interaction with host EXOC1 region spans residues Ser-2–Asn-15. Residues Ser-2–Thr-110 are Cytoplasmic-facing. The interval Leu-37–Val-72 is hydrophobic; homodimerization of capsid protein C. A propeptide spans Gly-106 to Ala-125 (ER anchor for the capsid protein C, removed in mature form by serine protease NS3). The chain crosses the membrane as a helical span at residues Ser-111–Phe-131. Topologically, residues Gln-132–Asn-251 are extracellular. An N-linked (GlcNAc...) asparagine; by host glycan is attached at Asn-140. A helical transmembrane segment spans residues Trp-252–Ser-272. The Cytoplasmic segment spans residues Asn-273–Lys-277. The chain crosses the membrane as a helical span at residues Val-278–Ser-292. Residues Phe-293 to Leu-745 are Extracellular-facing. 6 cysteine pairs are disulfide-bonded: Cys-295–Cys-322, Cys-352–Cys-408, Cys-352–Cys-413, Cys-366–Cys-397, Cys-384–Cys-408, and Cys-384–Cys-413. Residues Asp-390 to Gly-403 are fusion peptide. Asn-446 is a glycosylation site (N-linked (GlcNAc...) asparagine; by host). Disulfide bonds link Cys-482-Cys-580 and Cys-597-Cys-628. The helical transmembrane segment at Phe-746 to Val-766 threads the bilayer. Over Asn-767–Ser-772 the chain is Cytoplasmic. Residues Ile-773–Ala-793 traverse the membrane as a helical segment. The Extracellular segment spans residues Asp-794–Asp-1218. 2 disulfides stabilise this stretch: Cys-797–Cys-808 and Cys-848–Cys-936. N-linked (GlcNAc...) asparagine; by host glycosylation is found at Asn-923 and Asn-968. Disulfide bonds link Cys-972–Cys-1016, Cys-1073–Cys-1122, Cys-1084–Cys-1105, and Cys-1106–Cys-1109. Residue Asn-1000 is glycosylated (N-linked (GlcNAc...) (high mannose) asparagine; by host). The chain crosses the membrane as a helical span at residues Val-1219–Leu-1239. The Cytoplasmic portion of the chain corresponds to Thr-1240 to Asn-1249. The chain crosses the membrane as a helical span at residues Leu-1250–Ile-1270. The Lumenal segment spans residues Pro-1271–Ala-1286. The chain crosses the membrane as a helical span at residues Met-1287–Met-1307. Position 1308 (Arg-1308) is a topological domain, cytoplasmic. The chain crosses the membrane as a helical span at residues Met-1309–Asn-1329. Over Glu-1330–Gly-1340 the chain is Lumenal. A helical membrane pass occupies residues Ala-1341–Ala-1361. The Cytoplasmic portion of the chain corresponds to Gly-1362–Gly-1373. A helical transmembrane segment spans residues Trp-1374–Ala-1394. Residues Glu-1395 to Asp-1397 lie on the Lumenal side of the membrane. Residues Ile-1398–Ser-1418 traverse the membrane as a helical segment. Residues Gly-1419 to Thr-1475 lie on the Cytoplasmic side of the membrane. The segment at Leu-1426–Val-1465 is interacts with and activates NS3 protease. The helical intramembrane region spans Cys-1476–Leu-1496. Over Thr-1497–Ala-2172 the chain is Cytoplasmic. Residues Gly-1504–Ala-1681 form the Peptidase S7 domain. Catalysis depends on charge relay system; for serine protease NS3 activity residues His-1554, Asp-1578, and Ser-1638. The region spanning Pro-1684–Ser-1840 is the Helicase ATP-binding domain. The tract at residues Lys-1688–Gln-1691 is important for RNA-binding. Leu-1697–Thr-1704 provides a ligand contact to ATP. The short motif at Asp-1788 to His-1791 is the DEAH box element. The region spanning Gly-1851–Glu-2016 is the Helicase C-terminal domain. Lys-1892 bears the N6-acetyllysine; by host mark. A disordered region spans residues Ala-1958–Gly-1979. Residues Glu-2167–Asp-2171 form a regulates the ATPase activity of NS3 helicase region. Residues Leu-2173–Met-2193 form a helical membrane-spanning segment. Topologically, residues Met-2194–Lys-2197 are lumenal. Residues Gly-2198–Met-2218 constitute an intramembrane region (helical). Residues Ser-2219 to Asp-2220 are Lumenal-facing. A helical membrane pass occupies residues Val-2221–Ile-2241. The Cytoplasmic segment spans residues Pro-2242–Ala-2256. The chain crosses the membrane as a helical span at residues Val-2257–Ala-2271. Topologically, residues Asn-2272 to Asp-2309 are lumenal. Positions Leu-2310–Ile-2330 form an intramembrane region, helical. The Lumenal segment spans residues Lys-2331 to Asp-2366. The chain crosses the membrane as a helical span at residues Leu-2367–Leu-2394. The Cytoplasmic segment spans residues His-2395–Arg-2446. Residues Leu-2447–Thr-2467 traverse the membrane as a helical segment. Topologically, residues Thr-2468–Thr-2498 are lumenal. Residues Gly-2499–Ile-2519 traverse the membrane as a helical segment. Over Lys-2520–Leu-3434 the chain is Cytoplasmic. Residues Gly-2530–Ala-2795 enclose the mRNA cap 0-1 NS5-type MT domain. Residue Ser-2585 participates in S-adenosyl-L-methionine binding. Residue Ser-2585 is modified to Phosphoserine. Lys-2590 (for 2'-O-MTase activity) is an active-site residue. S-adenosyl-L-methionine contacts are provided by Gly-2615, Trp-2616, Thr-2633, Lys-2634, Asp-2660, and Val-2661. Catalysis depends on Asp-2675, which acts as the For 2'-O-MTase activity. Ile-2676 lines the S-adenosyl-L-methionine pocket. Active-site for 2'-O-MTase activity residues include Lys-2711 and Glu-2747. Tyr-2749 is an S-adenosyl-L-methionine binding site. Zn(2+)-binding residues include Glu-2969, His-2973, Cys-2978, and Cys-2981. Residues Gly-3059–Ala-3211 enclose the RdRp catalytic domain. Zn(2+) is bound by residues His-3246, Cys-3262, and Cys-3381.

It in the N-terminal section; belongs to the class I-like SAM-binding methyltransferase superfamily. mRNA cap 0-1 NS5-type methyltransferase family. In terms of assembly, homodimer. Interacts (via N-terminus) with host EXOC1 (via C-terminus); this interaction results in EXOC1 degradation through the proteasome degradation pathway. As to quaternary structure, forms heterodimers with envelope protein E in the endoplasmic reticulum and Golgi. Homodimer; in the endoplasmic reticulum and Golgi. Interacts with protein prM. Interacts with non-structural protein 1. In terms of assembly, homodimer; Homohexamer when secreted. Interacts with envelope protein E. NS1 interacts with NS4B. Interacts with host complement protein CFH; this interaction leads to the degradation of C3. As to quaternary structure, interacts (via N-terminus) with serine protease NS3. Forms a heterodimer with serine protease NS3. May form homooligomers. In terms of assembly, forms a heterodimer with NS2B. Interacts with non-structural protein 2A (via N-terminus). Interacts with NS4B. Interacts with unphosphorylated RNA-directed RNA polymerase NS5; this interaction stimulates RNA-directed RNA polymerase NS5 guanylyltransferase activity. As to quaternary structure, interacts with serine protease NS3. Homodimer. Interacts with host STAT2; this interaction inhibits the phosphorylation of the latter, and, when all viral proteins are present (polyprotein), targets STAT2 for degradation. Interacts with serine protease NS3. In terms of processing, specific enzymatic cleavages in vivo yield mature proteins. Cleavages in the lumen of endoplasmic reticulum are performed by host signal peptidase, whereas cleavages in the cytoplasmic side are performed by serine protease NS3. Signal cleavage at the 2K-4B site requires a prior NS3 protease-mediated cleavage at the 4A-2K site. Cleaved in post-Golgi vesicles by a host furin, releasing the mature small envelope protein M, and peptide pr. This cleavage is incomplete as up to 30% of viral particles still carry uncleaved prM. Post-translationally, N-glycosylated. In terms of processing, N-glycosylated. The excreted form is glycosylated and this is required for efficient secretion of the protein from infected cells. Acetylated by host KAT5. Acetylation modulates NS3 RNA-binding and unwinding activities and plays an important positive role for viral replication. Post-translationally, phosphorylated on serines residues. This phosphorylation may trigger NS5 nuclear localization.

The protein localises to the virion. Its subcellular location is the host nucleus. It localises to the host cytoplasm. It is found in the host perinuclear region. The protein resides in the secreted. The protein localises to the virion membrane. Its subcellular location is the host endoplasmic reticulum membrane. The enzyme catalyses Selective hydrolysis of -Xaa-Xaa-|-Yaa- bonds in which each of the Xaa can be either Arg or Lys and Yaa can be either Ser or Ala.. It catalyses the reaction RNA(n) + a ribonucleoside 5'-triphosphate = RNA(n+1) + diphosphate. It carries out the reaction a ribonucleoside 5'-triphosphate + H2O = a ribonucleoside 5'-diphosphate + phosphate + H(+). The catalysed reaction is ATP + H2O = ADP + phosphate + H(+). The enzyme catalyses a 5'-end (5'-triphosphoguanosine)-ribonucleoside in mRNA + S-adenosyl-L-methionine = a 5'-end (N(7)-methyl 5'-triphosphoguanosine)-ribonucleoside in mRNA + S-adenosyl-L-homocysteine. It catalyses the reaction a 5'-end (N(7)-methyl 5'-triphosphoguanosine)-ribonucleoside in mRNA + S-adenosyl-L-methionine = a 5'-end (N(7)-methyl 5'-triphosphoguanosine)-(2'-O-methyl-ribonucleoside) in mRNA + S-adenosyl-L-homocysteine + H(+). Plays a role in virus budding by binding to the cell membrane and gathering the viral RNA into a nucleocapsid that forms the core of a mature virus particle. During virus entry, may induce genome penetration into the host cytoplasm after hemifusion induced by the surface proteins. Can migrate to the cell nucleus where it modulates host functions. Overcomes the anti-viral effects of host EXOC1 by sequestering and degrading the latter through the proteasome degradation pathway. Functionally, inhibits RNA silencing by interfering with host Dicer. Its function is as follows. Prevents premature fusion activity of envelope proteins in trans-Golgi by binding to envelope protein E at pH6.0. After virion release in extracellular space, gets dissociated from E dimers. In terms of biological role, acts as a chaperone for envelope protein E during intracellular virion assembly by masking and inactivating envelope protein E fusion peptide. prM is the only viral peptide matured by host furin in the trans-Golgi network probably to avoid catastrophic activation of the viral fusion activity in acidic Golgi compartment prior to virion release. prM-E cleavage is inefficient, and many virions are only partially matured. These uncleaved prM would play a role in immune evasion. May play a role in virus budding. Exerts cytotoxic effects by activating a mitochondrial apoptotic pathway through M ectodomain. May display a viroporin activity. Functionally, binds to host cell surface receptor and mediates fusion between viral and cellular membranes. Envelope protein is synthesized in the endoplasmic reticulum in the form of heterodimer with protein prM. They play a role in virion budding in the ER, and the newly formed immature particle is covered with 60 spikes composed of heterodimer between precursor prM and envelope protein E. The virion is transported to the Golgi apparatus where the low pH causes dissociation of PrM-E heterodimers and formation of E homodimers. prM-E cleavage is inefficient, and many virions are only partially matured. These uncleaved prM would play a role in immune evasion. Its function is as follows. Involved in immune evasion, pathogenesis and viral replication. Once cleaved off the polyprotein, is targeted to three destinations: the viral replication cycle, the plasma membrane and the extracellular compartment. Essential for viral replication. Required for formation of the replication complex and recruitment of other non-structural proteins to the ER-derived membrane structures. Excreted as a hexameric lipoparticle that plays a role against host immune response. Antagonizing the complement function. Binds to the host macrophages and dendritic cells. Inhibits signal transduction originating from Toll-like receptor 3 (TLR3). In terms of biological role, component of the viral RNA replication complex that functions in virion assembly and antagonizes the host alpha/beta interferon antiviral response. Required cofactor for the serine protease function of NS3. May have membrane-destabilizing activity and form viroporins. Functionally, displays three enzymatic activities: serine protease, NTPase and RNA helicase. NS3 serine protease, in association with NS2B, performs its autocleavage and cleaves the polyprotein at dibasic sites in the cytoplasm: C-prM, NS2A-NS2B, NS2B-NS3, NS3-NS4A, NS4A-2K and NS4B-NS5. NS3 RNA helicase binds RNA and unwinds dsRNA in the 3' to 5' direction. Its function is as follows. Regulates the ATPase activity of the NS3 helicase activity. NS4A allows NS3 helicase to conserve energy during unwinding. In terms of biological role, functions as a signal peptide for NS4B and is required for the interferon antagonism activity of the latter. Induces the formation of ER-derived membrane vesicles where the viral replication takes place. Inhibits interferon (IFN)-induced host STAT1 phosphorylation and nuclear translocation, thereby preventing the establishment of cellular antiviral state by blocking the IFN-alpha/beta pathway. Inhibits STAT2 translocation in the nucleus after IFN-alpha treatment. Functionally, replicates the viral (+) and (-) RNA genome, and performs the capping of genomes in the cytoplasm. NS5 methylates viral RNA cap at guanine N-7 and ribose 2'-O positions. Besides its role in RNA genome replication, also prevents the establishment of cellular antiviral state by blocking the interferon-alpha/beta (IFN-alpha/beta) signaling pathway. Inhibits host TYK2 and STAT2 phosphorylation, thereby preventing activation of JAK-STAT signaling pathway. In Culex annulirostris (Common banded mosquito), this protein is Genome polyprotein.